We begin with the raw amino-acid sequence, 326 residues long: L-lactate dehydrogenase (326 aa).

NAD(+)-binding positions include Val-26, Asp-47, Lys-52, Tyr-78, and 92 to 93; that span reads GA. Residues Gln-95 and Arg-101 each contribute to the substrate site. NAD(+)-binding positions include Thr-114, 131–133, and Ser-156; that span reads ASN. Substrate is bound at residue 133–136; it reads NPVD. 161–164 provides a ligand contact to substrate; it reads DTAR. Positions 166 and 181 each coordinate beta-D-fructose 1,6-bisphosphate. His-188 (proton acceptor) is an active-site residue. Tyr-233 bears the Phosphotyrosine mark. Thr-242 lines the substrate pocket.

Belongs to the LDH/MDH superfamily. LDH family. In terms of assembly, homotetramer.

It localises to the cytoplasm. It carries out the reaction (S)-lactate + NAD(+) = pyruvate + NADH + H(+). The protein operates within fermentation; pyruvate fermentation to lactate; (S)-lactate from pyruvate: step 1/1. With respect to regulation, allosterically activated by fructose 1,6-bisphosphate (FBP). Catalyzes the conversion of lactate to pyruvate. In Corynebacterium jeikeium (strain K411), this protein is L-lactate dehydrogenase.